A 631-amino-acid chain; its full sequence is Phosphomethylpyrimidine synthase (631 aa).

Residues Asn239, Met268, Tyr297, His333, 353-355, 394-397, and Glu433 each bind substrate; these read SRG and DGLR. Residue His437 participates in Zn(2+) binding. Position 460 (Tyr460) interacts with substrate. His501 lines the Zn(2+) pocket. [4Fe-4S] cluster-binding residues include Cys581, Cys584, and Cys589.

It belongs to the ThiC family. In terms of assembly, homodimer. It depends on [4Fe-4S] cluster as a cofactor.

It catalyses the reaction 5-amino-1-(5-phospho-beta-D-ribosyl)imidazole + S-adenosyl-L-methionine = 4-amino-2-methyl-5-(phosphooxymethyl)pyrimidine + CO + 5'-deoxyadenosine + formate + L-methionine + 3 H(+). The protein operates within cofactor biosynthesis; thiamine diphosphate biosynthesis. Functionally, catalyzes the synthesis of the hydroxymethylpyrimidine phosphate (HMP-P) moiety of thiamine from aminoimidazole ribotide (AIR) in a radical S-adenosyl-L-methionine (SAM)-dependent reaction. The protein is Phosphomethylpyrimidine synthase of Salmonella enteritidis PT4 (strain P125109).